The sequence spans 844 residues: Translation elongation factor 2 (844 aa).

One can recognise a tr-type G domain in the interval Arg17–Val348. Ala26–Ser33 contributes to the GTP binding site. Phosphothreonine is present on residues Thr57 and Thr59. Residues Asn162–Asp165 and Ser219–Leu221 each bind GTP. At Ser488 the chain carries Phosphoserine. Residue His701 is modified to Diphthamide.

It belongs to the TRAFAC class translation factor GTPase superfamily. Classic translation factor GTPase family. EF-G/EF-2 subfamily. In terms of processing, phosphorylation by EF-2 kinase completely inactivates EF-2.

It localises to the cytoplasm. It carries out the reaction GTP + H2O = GDP + phosphate + H(+). Its function is as follows. Catalyzes the GTP-dependent ribosomal translocation step during translation elongation. During this step, the ribosome changes from the pre-translocational (PRE) to the post-translocational (POST) state as the newly formed A-site-bound peptidyl-tRNA and P-site-bound deacylated tRNA move to the P and E sites, respectively. Catalyzes the coordinated movement of the two tRNA molecules, the mRNA and conformational changes in the ribosome. The polypeptide is Translation elongation factor 2 (Bombyx mori (Silk moth)).